The following is a 127-amino-acid chain: uncharacterized protein (127 aa).

A helical membrane pass occupies residues 12-32 (FFFLILFYFCIISSFLFLFIF).

The protein resides in the membrane. This is an uncharacterized protein from Saccharomyces cerevisiae (strain ATCC 204508 / S288c) (Baker's yeast).